We begin with the raw amino-acid sequence, 208 residues long: Small ribosomal subunit protein eS8 (208 aa).

The tract at residues 1-37 (MGISRDNWHKRRKTGGKRKPYHKKRKYEPGRPAANTK) is disordered. Residues 8-26 (WHKRRKTGGKRKPYHKKRK) show a composition bias toward basic residues.

This sequence belongs to the eukaryotic ribosomal protein eS8 family. In terms of assembly, component of the small ribosomal subunit. Identified in a IGF2BP1-dependent mRNP granule complex containing untranslated mRNAs. Part of the small subunit (SSU) processome, composed of more than 70 proteins and the RNA chaperone small nucleolar RNA (snoRNA) U3.

The protein resides in the cytoplasm. It localises to the membrane. The protein localises to the nucleus. Its subcellular location is the nucleolus. Component of the small ribosomal subunit. The ribosome is a large ribonucleoprotein complex responsible for the synthesis of proteins in the cell. Part of the small subunit (SSU) processome, first precursor of the small eukaryotic ribosomal subunit. During the assembly of the SSU processome in the nucleolus, many ribosome biogenesis factors, an RNA chaperone and ribosomal proteins associate with the nascent pre-rRNA and work in concert to generate RNA folding, modifications, rearrangements and cleavage as well as targeted degradation of pre-ribosomal RNA by the RNA exosome. This is Small ribosomal subunit protein eS8 (rps8) from Xenopus laevis (African clawed frog).